A 64-amino-acid chain; its full sequence is Large ribosomal subunit protein bL35 (64 aa).

Residues 1-56 form a disordered region; sequence MPKMKSNKSVAARFKLTGSGQLKRTRPGKRHKLSKKSSQEKRNLSKQPLVDKGQVG. Positions 23 to 35 are enriched in basic residues; it reads KRTRPGKRHKLSK.

This sequence belongs to the bacterial ribosomal protein bL35 family.

The chain is Large ribosomal subunit protein bL35 from Chlamydia abortus (strain DSM 27085 / S26/3) (Chlamydophila abortus).